The sequence spans 88 residues: DNA-directed RNA polymerase subunit omega (88 aa).

It belongs to the RNA polymerase subunit omega family. The RNAP catalytic core consists of 2 alpha, 1 beta, 1 beta' and 1 omega subunit. When a sigma factor is associated with the core the holoenzyme is formed, which can initiate transcription.

It catalyses the reaction RNA(n) + a ribonucleoside 5'-triphosphate = RNA(n+1) + diphosphate. Its function is as follows. Promotes RNA polymerase assembly. Latches the N- and C-terminal regions of the beta' subunit thereby facilitating its interaction with the beta and alpha subunits. This is DNA-directed RNA polymerase subunit omega from Salinispora arenicola (strain CNS-205).